Reading from the N-terminus, the 712-residue chain is uncharacterized protein (712 aa).

Disordered regions lie at residues 1 to 46, 107 to 264, and 370 to 389; these read MAKI…NNLN, NIKP…IPQA, and QPQH…QQNQ. 3 stretches are compositionally biased toward low complexity: residues 10 to 46, 107 to 143, and 161 to 173; these read INNS…NNLN, NIKP…SNSS, and TFDN…NSSN. Positions 178-187 are enriched in polar residues; sequence ISPTTSPQLE. 2 stretches are compositionally biased toward low complexity: residues 188–198 and 241–264; these read QHQQYQQQQHQ and PLQQ…IPQA.

This is an uncharacterized protein from Dictyostelium discoideum (Social amoeba).